An 887-amino-acid polypeptide reads, in one-letter code: Inter-alpha-trypsin inhibitor heavy chain H3 (887 aa).

The signal sequence occupies residues 1 to 21; it reads MVTLWWPCLVLALLSGLETSG. Positions 22 to 33 are excised as a propeptide; the sequence is FPRSPLRLLGKR. The region spanning 29–158 is the VIT domain; it reads LLGKRSLPEG…KVIFELTYEE (130 aa). A glycan (N-linked (GlcNAc...) asparagine) is linked at Asn91. Residues 282 to 442 form the VWFA domain; sequence PKNIAFVIDV…YNFLESLALE (161 aa). N-linked (GlcNAc...) asparagine glycosylation is present at Asn580. Aspartate 1-(chondroitin 4-sulfate)-ester is present on Asp647. Residues 648–887 constitute a propeptide that is removed on maturation; that stretch reads PHFIIQVPGK…HTDYIVPSLF (240 aa).

The protein belongs to the ITIH family. I-alpha-I plasma protease inhibitors are assembled from one or two heavy chains (HC) and one light chain, bikunin. Pre-alpha-inhibitor (P-alpha-I) is composed of ITIH3/HC3 and bikunin. In terms of processing, heavy chains are linked to bikunin via chondroitin 4-sulfate esterified to the alpha-carboxyl of the C-terminal aspartate after propeptide cleavage.

It localises to the secreted. In terms of biological role, may act as a carrier of hyaluronan in serum or as a binding protein between hyaluronan and other matrix protein, including those on cell surfaces in tissues to regulate the localization, synthesis and degradation of hyaluronan which are essential to cells undergoing biological processes. This Rattus norvegicus (Rat) protein is Inter-alpha-trypsin inhibitor heavy chain H3 (Itih3).